Reading from the N-terminus, the 325-residue chain is Ubiquitin thioesterase OTU1 (325 aa).

The interval 7 to 86 (RIRSKTGVEN…NVSSISSNPG (80 aa)) is UBX-like. Positions 123-246 (ATRRVTDDDN…GIHYDALSIC (124 aa)) constitute an OTU domain. Residues 128–134 (TDDDNSC) form a cys-loop region. Residue Asp131 is part of the active site. The active-site Nucleophile is Cys134. Positions 185–195 (IQNPKNWGGAI) are variable-loop. Residues 235–239 (YDGIH) are his-loop. Ile238 contacts substrate. Residue His239 is part of the active site. Positions 265–270 (KDSLAK) are S2 site. A C2H2-type zinc finger spans residues 292–316 (LICLNCNKTLKGEKEAAIHASTTGH). Residue His316 is part of the active site.

It localises to the cytoplasm. The catalysed reaction is Thiol-dependent hydrolysis of ester, thioester, amide, peptide and isopeptide bonds formed by the C-terminal Gly of ubiquitin (a 76-residue protein attached to proteins as an intracellular targeting signal).. In terms of biological role, hydrolase that can remove conjugated ubiquitin from proteins and may therefore play an important regulatory role at the level of protein turnover by preventing degradation. In Dictyostelium discoideum (Social amoeba), this protein is Ubiquitin thioesterase OTU1 (yod1).